The sequence spans 393 residues: DNA-directed RNA polymerase subunit Rpo1C (393 aa).

Belongs to the RNA polymerase beta' chain family. Part of the RNA polymerase complex.

It is found in the cytoplasm. The catalysed reaction is RNA(n) + a ribonucleoside 5'-triphosphate = RNA(n+1) + diphosphate. In terms of biological role, DNA-dependent RNA polymerase (RNAP) catalyzes the transcription of DNA into RNA using the four ribonucleoside triphosphates as substrates. Forms part of the jaw domain. This Halococcus morrhuae (Micrococcus morrhuae) protein is DNA-directed RNA polymerase subunit Rpo1C.